Here is a 248-residue protein sequence, read N- to C-terminus: CKLF-like MARVEL transmembrane domain-containing protein 2 (248 aa).

Residues M1–G63 are disordered. Positions E12–A22 are enriched in pro residues. Basic and acidic residues predominate over residues K23–G63. The 123-residue stretch at F82 to R204 folds into the MARVEL domain. The next 3 membrane-spanning stretches (helical) occupy residues L116 to I136, I147 to A167, and Y178 to L198. Residues A208–K248 form a disordered region. Residues P231–K248 show a composition bias toward pro residues.

It belongs to the chemokine-like factor family. Highly expressed in testis.

The protein resides in the membrane. This Homo sapiens (Human) protein is CKLF-like MARVEL transmembrane domain-containing protein 2 (CMTM2).